A 233-amino-acid chain; its full sequence is 2,3,4,5-tetrahydropyridine-2,6-dicarboxylate N-acetyltransferase (233 aa).

The protein belongs to the transferase hexapeptide repeat family. DapH subfamily.

The catalysed reaction is (S)-2,3,4,5-tetrahydrodipicolinate + acetyl-CoA + H2O = L-2-acetamido-6-oxoheptanedioate + CoA. It functions in the pathway amino-acid biosynthesis; L-lysine biosynthesis via DAP pathway; LL-2,6-diaminopimelate from (S)-tetrahydrodipicolinate (acetylase route): step 1/3. In terms of biological role, catalyzes the transfer of an acetyl group from acetyl-CoA to tetrahydrodipicolinate. This is 2,3,4,5-tetrahydropyridine-2,6-dicarboxylate N-acetyltransferase from Petrotoga mobilis (strain DSM 10674 / SJ95).